Consider the following 113-residue polypeptide: MDKSVRLRDNREYNVVYKRGKTYYNRNFSLVVYNSKKGTRIGFSVTKKYGNAVERNRIKRKLREIVRLNFSEFDKGLDMVIIPKKNTEDLTYKQLESALLHVCRKASNKKCQK.

It belongs to the RnpA family. As to quaternary structure, consists of a catalytic RNA component (M1 or rnpB) and a protein subunit.

It catalyses the reaction Endonucleolytic cleavage of RNA, removing 5'-extranucleotides from tRNA precursor.. Its function is as follows. RNaseP catalyzes the removal of the 5'-leader sequence from pre-tRNA to produce the mature 5'-terminus. It can also cleave other RNA substrates such as 4.5S RNA. The protein component plays an auxiliary but essential role in vivo by binding to the 5'-leader sequence and broadening the substrate specificity of the ribozyme. The polypeptide is Ribonuclease P protein component (Finegoldia magna (strain ATCC 29328 / DSM 20472 / WAL 2508) (Peptostreptococcus magnus)).